Consider the following 562-residue polypeptide: Urocanate hydratase (562 aa).

NAD(+)-binding positions include 52–53, Gln-130, 176–178, Glu-196, Arg-201, 242–243, 263–267, 273–274, and Tyr-322; these read GG, GMG, NA, QTSAH, and YL. Residue Cys-410 is part of the active site. An NAD(+)-binding site is contributed by Gly-492.

The protein belongs to the urocanase family. NAD(+) serves as cofactor.

Its subcellular location is the cytoplasm. It carries out the reaction 4-imidazolone-5-propanoate = trans-urocanate + H2O. It functions in the pathway amino-acid degradation; L-histidine degradation into L-glutamate; N-formimidoyl-L-glutamate from L-histidine: step 2/3. Its function is as follows. Catalyzes the conversion of urocanate to 4-imidazolone-5-propionate. This Klebsiella pneumoniae (strain 342) protein is Urocanate hydratase.